Here is a 65-residue protein sequence, read N- to C-terminus: Small ribosomal subunit protein bS21 (65 aa).

Residues D44–S65 form a disordered region. Over residues K48 to Q57 the composition is skewed to basic residues.

The protein belongs to the bacterial ribosomal protein bS21 family.

The protein is Small ribosomal subunit protein bS21 of Prosthecochloris aestuarii (strain DSM 271 / SK 413).